The primary structure comprises 125 residues: Protein 5 (125 aa).

The sequence is that of Protein 5 (5) from Hordeum vulgare (Barley).